We begin with the raw amino-acid sequence, 156 residues long: Oxidized purine nucleoside triphosphate hydrolase (156 aa).

The 130-residue stretch at 3–132 (TSKLLTLVLV…WFPLMLQKKR (130 aa)) folds into the Nudix hydrolase domain. A 2-oxo-dATP-binding site is contributed by Thr8. O(6)-methyl-dGMP-binding positions include Thr8, Lys23, Asn33, and 35-38 (FGGK). Lys23 contributes to the 8-oxo-dGTP binding site. 2-oxo-dATP contacts are provided by residues Asn33 and 35–38 (FGGK). Mg(2+)-binding residues include Gly36, Glu52, Glu55, Glu56, and Glu100. A Nudix box motif is present at residues 37 to 58 (GKVQTGETIEQAARRELLEESG). 117–120 (WADD) contacts 2-oxo-dATP. 117–120 (WADD) provides a ligand contact to O(6)-methyl-dGMP.

It belongs to the Nudix hydrolase family. In terms of assembly, monomer. The cofactor is Mg(2+).

The protein resides in the cytoplasm. The protein localises to the cytosol. It is found in the mitochondrion matrix. Its subcellular location is the nucleus. The catalysed reaction is 2-oxo-dATP + H2O = 2-oxo-dAMP + diphosphate + H(+). It catalyses the reaction 2-oxo-ATP + H2O = 2-oxo-AMP + diphosphate + H(+). The enzyme catalyses 8-oxo-dGTP + H2O = 8-oxo-dGMP + diphosphate + H(+). It carries out the reaction 8-oxo-dATP + H2O = 8-oxo-dAMP + diphosphate + H(+). The catalysed reaction is O(6)-methyl-dGTP + H2O = O(6)-methyl-dGMP + diphosphate + H(+). It catalyses the reaction N(6)-methyl-dATP + H2O = N(6)-methyl-dAMP + diphosphate + H(+). The enzyme catalyses N(6)-methyl-ATP + H2O = N(6)-methyl-AMP + diphosphate + H(+). Inhibited by TH588. In terms of biological role, oxidized purine nucleoside triphosphate hydrolase which is a prominent sanitizer of the oxidized nucleotide pool. Catalyzes the hydrolysis of 2-oxo-dATP (2-hydroxy-dATP) into 2-oxo-dAMP. Also has a significant hydrolase activity toward 2-oxo-ATP, 8-oxo-dGTP and 8-oxo-dATP. Through the hydrolysis of oxidized purine nucleoside triphosphates, prevents their incorporation into DNA and the subsequent transversions A:T to C:G and G:C to T:A. Also catalyzes the hydrolysis of methylated purine nucleoside triphosphate preventing their integration into DNA. Through this antimutagenic activity protects cells from oxidative stress. The chain is Oxidized purine nucleoside triphosphate hydrolase (nudt1) from Danio rerio (Zebrafish).